The primary structure comprises 271 residues: Phosphonoacetaldehyde hydrolase (271 aa).

Catalysis depends on aspartate 12, which acts as the Nucleophile. Positions 12 and 14 each coordinate Mg(2+). Lysine 54 (schiff-base intermediate with substrate) is an active-site residue. Aspartate 188 serves as a coordination point for Mg(2+).

This sequence belongs to the HAD-like hydrolase superfamily. PhnX family. Homodimer. The cofactor is Mg(2+).

It catalyses the reaction phosphonoacetaldehyde + H2O = acetaldehyde + phosphate + H(+). In terms of biological role, involved in phosphonate degradation. This is Phosphonoacetaldehyde hydrolase from Aliivibrio salmonicida (strain LFI1238) (Vibrio salmonicida (strain LFI1238)).